Here is a 160-residue protein sequence, read N- to C-terminus: MVEIKLVNKEIIKFGLALGIVNELNEYLYAAMPPMYDILSKLYGYGRTVNAMLYSVLFNLLESRIDTLRRLDLSKFFAVVAYMDAVKDTVELAINGYAYVTTSGFTVYPASQITGTYESDFSQAKAVPANTTATQVWFAPKKFALITQNKIYTFLAPYWF.

It localises to the virion. The protein is Coat protein TP3 of Thermoproteus tenax (TTV1).